Consider the following 173-residue polypeptide: NADH-quinone oxidoreductase subunit B 1 (173 aa).

Residues Cys42, Cys43, Cys107, and Cys137 each coordinate [4Fe-4S] cluster.

This sequence belongs to the complex I 20 kDa subunit family. As to quaternary structure, NDH-1 is composed of 14 different subunits. Subunits NuoB, C, D, E, F, and G constitute the peripheral sector of the complex. [4Fe-4S] cluster is required as a cofactor.

The protein resides in the cell inner membrane. The enzyme catalyses a quinone + NADH + 5 H(+)(in) = a quinol + NAD(+) + 4 H(+)(out). Functionally, NDH-1 shuttles electrons from NADH, via FMN and iron-sulfur (Fe-S) centers, to quinones in the respiratory chain. The immediate electron acceptor for the enzyme in this species is believed to be ubiquinone. Couples the redox reaction to proton translocation (for every two electrons transferred, four hydrogen ions are translocated across the cytoplasmic membrane), and thus conserves the redox energy in a proton gradient. The protein is NADH-quinone oxidoreductase subunit B 1 of Anaeromyxobacter sp. (strain K).